Here is a 213-residue protein sequence, read N- to C-terminus: Ribosomal RNA small subunit methyltransferase G (213 aa).

Residues G83, L88, I132–E133, and R146 each bind S-adenosyl-L-methionine.

This sequence belongs to the methyltransferase superfamily. RNA methyltransferase RsmG family.

It is found in the cytoplasm. The catalysed reaction is guanosine(527) in 16S rRNA + S-adenosyl-L-methionine = N(7)-methylguanosine(527) in 16S rRNA + S-adenosyl-L-homocysteine. Its function is as follows. Specifically methylates the N7 position of guanine in position 527 of 16S rRNA. The sequence is that of Ribosomal RNA small subunit methyltransferase G from Granulibacter bethesdensis (strain ATCC BAA-1260 / CGDNIH1).